The following is a 410-amino-acid chain: MTEETHPDDDSYIVRVKAVVMTRDDSSGGWFPQEGGGISRVGVCKVMHPEGNGRSGFLIHGERQKDKLVVLECYVRKDLVYTKANPTFHHWKVDNRKFGLTFQSPADARAFDRGVRKAIEDLIEGSTTSSSTIHNEAELGDDDVFTTATDSSSNSSQKREPNTRTISSPTSCEHRRIYTLDPYPMDLYHPDQRLPRSYPQVTFPEDDEEIVRINPREKIWMTGYEDYRHAPVRGKYLDSTEDADSYVRFAKGEVPKHEYTYPYVDSSDFGFGEDPKGNVIKTQPPRAKSRRRKENGERSRCVYCRDMFNHEENRRGHCQDAPDAVRTCIRRVSCMWCADSMLYHCMSDPEGDYTDPCSCDTSDEKFCLRWMALIALSFLAPCMCCYLPLRACHHCGVMCRCCGGKHKAAA.

The WH1 domain maps to 5-122 (THPDDDSYIV…RGVRKAIEDL (118 aa)). Residues 127 to 171 (TTSSSTIHNEAELGDDDVFTTATDSSSNSSQKREPNTRTISSPTS) form a disordered region. The span at 146–156 (TTATDSSSNSS) shows a compositional bias: polar residues. In terms of domain architecture, KBD spans 197–252 (SYPQVTFPEDDEEIVRINPREKIWMTGYEDYRHAPVRGKYLDSTEDADSYVRFAKG). 2 positions are modified to phosphotyrosine: Tyr224 and Tyr227. Positions 274–294 (DPKGNVIKTQPPRAKSRRRKE) are disordered. Positions 300–408 (RCVYCRDMFN…CRCCGGKHKA (109 aa)) constitute an SPR domain.

Homodimer and heterodimer. Able to interact with SPRED1 to form heterodimers. Interacts with RAS. May interact with ZDHHC13 (via ANK repeats) and ZDHHC17 (via ANK repeats). Interacts with TESK1. Interacts with NF1. Phosphorylated on serine and threonine residues. Phosphorylated on tyrosine. Phosphorylation of Tyr-224 and Tyr-227 are required for ubiquitination. Post-translationally, ubiquitinated; leading to degradation by the proteasome. In terms of tissue distribution, expressed in the eye, with higher expression in lens epithelium than in lens fiber cells at postnatal day 15.

The protein localises to the cell membrane. It is found in the cytoplasmic vesicle. Its subcellular location is the secretory vesicle membrane. It localises to the cytoplasm. In terms of biological role, negatively regulates Ras signaling pathways and downstream activation of MAP kinases. Recruits and translocates NF1 to the cell membrane, thereby enabling NF1-dependent hydrolysis of active GTP-bound Ras to inactive GDP-bound Ras. Inhibits fibroblast growth factor (FGF)-induced retinal lens fiber differentiation, probably by inhibiting FGF-mediated phosphorylation of ERK1/2. Inhibits TGFB-induced epithelial-to-mesenchymal transition in lens epithelial cells. This is Sprouty-related, EVH1 domain-containing protein 2 (Spred2) from Rattus norvegicus (Rat).